The primary structure comprises 226 residues: Ribonuclease 3 (226 aa).

Residues 6-128 enclose the RNase III domain; it reads FNKLQKKMGY…IIGGIFLDSN (123 aa). Mg(2+) is bound at residue glutamate 41. Residue aspartate 45 is part of the active site. Mg(2+) is bound by residues asparagine 114 and glutamate 117. Glutamate 117 is an active-site residue. The DRBM domain maps to 155 to 225; that stretch reads DPKTRLQEYL…AKQALLLFNI (71 aa).

The protein belongs to the ribonuclease III family. In terms of assembly, homodimer. The cofactor is Mg(2+).

Its subcellular location is the cytoplasm. The catalysed reaction is Endonucleolytic cleavage to 5'-phosphomonoester.. Its function is as follows. Digests double-stranded RNA. Involved in the processing of primary rRNA transcript to yield the immediate precursors to the large and small rRNAs (23S and 16S). Processes some mRNAs, and tRNAs when they are encoded in the rRNA operon. Processes pre-crRNA and tracrRNA of type II CRISPR loci if present in the organism. The polypeptide is Ribonuclease 3 (Wigglesworthia glossinidia brevipalpis).